We begin with the raw amino-acid sequence, 396 residues long: Ribosomal RNA large subunit methyltransferase G (396 aa).

This sequence belongs to the methyltransferase superfamily. RlmG family.

It is found in the cytoplasm. The enzyme catalyses guanosine(1835) in 23S rRNA + S-adenosyl-L-methionine = N(2)-methylguanosine(1835) in 23S rRNA + S-adenosyl-L-homocysteine + H(+). Its function is as follows. Specifically methylates the guanine in position 1835 (m2G1835) of 23S rRNA. This chain is Ribosomal RNA large subunit methyltransferase G, found in Yersinia enterocolitica serotype O:8 / biotype 1B (strain NCTC 13174 / 8081).